A 541-amino-acid polypeptide reads, in one-letter code: FAD-linked oxidoreductase pynB (541 aa).

Residues 1–20 (MRLSARGFVWSALLACTASA) form the signal peptide. N-linked (GlcNAc...) asparagine glycans are attached at residues Asn30, Asn57, Asn117, Asn131, Asn158, Asn253, Asn306, Asn343, Asn430, and Asn461. An FAD-binding PCMH-type domain is found at 71–242 (FNEFPALIAY…VDFDLQLMQF (172 aa)).

This sequence belongs to the oxygen-dependent FAD-linked oxidoreductase family. It depends on FAD as a cofactor.

The protein operates within secondary metabolite biosynthesis. FAD-linked oxidoreductase; part of the gene cluster that mediates the biosynthesis of pyranonigrins, a family of antioxidative compounds. The first step of pyranonigrins biosynthesis is performed by the hybrid PKS-NRPS synthetase that condenses 6 malonyl-CoA units to an acetyl starter unit, to form a 1,3,5-trioxotetradecane-6,8-dienyl-ACP. The enoyl reductase (ER) domain of pynA is likely to be functional during the first two rounds of polyketide chain extension, to generate the saturated C-C bonds of the alkyl side chain. PynA subsequently forms the amide bond between the acyl chain and L-serine. Although pynA has a terminal reductase domain, it appears to require the thioesterase pynI for the release of the straight-chain intermediate from pynA via the formation of a tetramic acid pyranonigrin J. The methyltransferase pynC then coverts pyranonigrin J to pyranonigrin I via N-methylation. The FAD-dependent monooxygenase pynG catalyzes an epoxidation-mediated cyclization to form the dihydro-gamma-pyrone moiety, followed by pynD-catalyzed oxidation of the alcohol to the ketone and enolization to yield the characteristic tetramic acid-fused gamma-pyrone core of pyranonigrin H. Pyranonigrin H is substrate of pynH for dehydration-mediated exo-methylene formation from the serine side chain to produce pyranonigrin E, before the oxidase pynE reduces the exo-methylene of pyranonigrin E into a pendant methyl to form pyranonigrin G. The FAD-linked oxidoreductase pynB performs the reverse reaction and converts pyranonigrin G back to pyranonigrin E. This Aspergillus niger (strain ATCC MYA-4892 / CBS 513.88 / FGSC A1513) protein is FAD-linked oxidoreductase pynB.